A 557-amino-acid polypeptide reads, in one-letter code: CTP synthase (557 aa).

Residues M1–L270 are amidoligase domain. S13 lines the CTP pocket. S13 is a UTP binding site. ATP contacts are provided by residues S14–I19 and D71. Positions 71 and 144 each coordinate Mg(2+). Residues D151–E153, K191–Q196, and K227 each bind CTP. UTP contacts are provided by residues K191–Q196 and K227. The Glutamine amidotransferase type-1 domain maps to T295 to S547. Residue G356 coordinates L-glutamine. The active-site Nucleophile; for glutamine hydrolysis is C383. Residues L384–Q387, E407, and R473 each bind L-glutamine. Catalysis depends on residues H520 and E522.

Belongs to the CTP synthase family. Homotetramer.

It carries out the reaction UTP + L-glutamine + ATP + H2O = CTP + L-glutamate + ADP + phosphate + 2 H(+). It catalyses the reaction L-glutamine + H2O = L-glutamate + NH4(+). The enzyme catalyses UTP + NH4(+) + ATP = CTP + ADP + phosphate + 2 H(+). It functions in the pathway pyrimidine metabolism; CTP biosynthesis via de novo pathway; CTP from UDP: step 2/2. Allosterically activated by GTP, when glutamine is the substrate; GTP has no effect on the reaction when ammonia is the substrate. The allosteric effector GTP functions by stabilizing the protein conformation that binds the tetrahedral intermediate(s) formed during glutamine hydrolysis. Inhibited by the product CTP, via allosteric rather than competitive inhibition. In terms of biological role, catalyzes the ATP-dependent amination of UTP to CTP with either L-glutamine or ammonia as the source of nitrogen. Regulates intracellular CTP levels through interactions with the four ribonucleotide triphosphates. The chain is CTP synthase from Paraburkholderia xenovorans (strain LB400).